A 153-amino-acid polypeptide reads, in one-letter code: Histone H2B.6 (153 aa).

Basic and acidic residues-rich tracts occupy residues 1–28 (MAPK…EKAP) and 36–53 (EKRL…EGKK). The segment at 1-60 (MAPKAEKKPAAKKPAEEEPAAEKAEKAPAGKKPKAEKRLPAGKGEKGSGEGKKAGRKKGK) is disordered. Lys-7 and Lys-37 each carry N6-acetyllysine. Lys-149 is covalently cross-linked (Glycyl lysine isopeptide (Lys-Gly) (interchain with G-Cter in ubiquitin)).

This sequence belongs to the histone H2B family. The nucleosome is a histone octamer containing two molecules each of H2A, H2B, H3 and H4 assembled in one H3-H4 heterotetramer and two H2A-H2B heterodimers. The octamer wraps approximately 147 bp of DNA. Can be acetylated to form H2BK6ac and H2BK33ac. In terms of processing, monoubiquitinated by BRE1 to form H2BK143ub1 and deubiquitinated by UBP26. Required for heterochromatic histone H3 di- and trimethylation at H3K4me. May give a specific tag for epigenetic transcriptional activation.

Its subcellular location is the nucleus. It localises to the chromosome. Functionally, core component of nucleosome. Nucleosomes wrap and compact DNA into chromatin, limiting DNA accessibility to the cellular machineries which require DNA as a template. Histones thereby play a central role in transcription regulation, DNA repair, DNA replication and chromosomal stability. DNA accessibility is regulated via a complex set of post-translational modifications of histones, also called histone code, and nucleosome remodeling. In Oryza sativa subsp. indica (Rice), this protein is Histone H2B.6 (H2B.6).